The chain runs to 58 residues: Small ribosomal subunit protein bS21 (58 aa).

Residues 34–58 (KREHYEKPSVKRKKKSEAARKRKFK) are disordered. The segment covering 43-58 (VKRKKKSEAARKRKFK) has biased composition (basic residues).

It belongs to the bacterial ribosomal protein bS21 family.

This is Small ribosomal subunit protein bS21 from Clostridium acetobutylicum (strain ATCC 824 / DSM 792 / JCM 1419 / IAM 19013 / LMG 5710 / NBRC 13948 / NRRL B-527 / VKM B-1787 / 2291 / W).